Reading from the N-terminus, the 425-residue chain is Histidine--tRNA ligase (425 aa).

It belongs to the class-II aminoacyl-tRNA synthetase family. In terms of assembly, homodimer.

The protein resides in the cytoplasm. It catalyses the reaction tRNA(His) + L-histidine + ATP = L-histidyl-tRNA(His) + AMP + diphosphate + H(+). The protein is Histidine--tRNA ligase of Streptococcus uberis (strain ATCC BAA-854 / 0140J).